Consider the following 257-residue polypeptide: Glutamate racemase (257 aa).

Substrate contacts are provided by residues 12–13 (DS) and 44–45 (YG). Cys75 (proton donor/acceptor) is an active-site residue. 76–77 (NT) contributes to the substrate binding site. The active-site Proton donor/acceptor is Cys185. 186 to 187 (TH) serves as a coordination point for substrate.

The protein belongs to the aspartate/glutamate racemases family.

It carries out the reaction L-glutamate = D-glutamate. It participates in cell wall biogenesis; peptidoglycan biosynthesis. In terms of biological role, provides the (R)-glutamate required for cell wall biosynthesis. This chain is Glutamate racemase, found in Clostridium botulinum (strain Okra / Type B1).